A 527-amino-acid chain; its full sequence is Outer capsid protein VP5 (527 aa).

An involved in membrane permeabilization region spans residues M1–D42.

Belongs to the orbivirus VP5 family.

It localises to the virion. VP5 protein is one of the two proteins (with VP2) which constitute the virus particle outer capsid. Acts as a membrane permeabilization protein that mediates release of viral particles from endosomal compartments into the cytoplasm. Permeabilization activity is probably negatively regulated by VP2 and is triggered by endosomal degradation of VP2 and exposure to low pH. The polypeptide is Outer capsid protein VP5 (Segment-6) (Antilocapra americana (Pronghorn)).